A 304-amino-acid chain; its full sequence is N-acetyl-D-glucosamine kinase (304 aa).

Residues 4–11 (GFDMGGTK) and 133–140 (GVGGGLIV) each bind ATP. Positions 157, 177, 179, and 184 each coordinate Zn(2+).

The protein belongs to the ROK (NagC/XylR) family. NagK subfamily.

It catalyses the reaction N-acetyl-D-glucosamine + ATP = N-acetyl-D-glucosamine 6-phosphate + ADP + H(+). The protein operates within cell wall biogenesis; peptidoglycan recycling. Functionally, catalyzes the phosphorylation of N-acetyl-D-glucosamine (GlcNAc) derived from cell-wall degradation, yielding GlcNAc-6-P. This is N-acetyl-D-glucosamine kinase from Yersinia pseudotuberculosis serotype IB (strain PB1/+).